Reading from the N-terminus, the 307-residue chain is tRNA pseudouridine synthase B (307 aa).

Catalysis depends on D48, which acts as the Nucleophile.

Belongs to the pseudouridine synthase TruB family. Type 1 subfamily.

It carries out the reaction uridine(55) in tRNA = pseudouridine(55) in tRNA. Responsible for synthesis of pseudouridine from uracil-55 in the psi GC loop of transfer RNAs. The polypeptide is tRNA pseudouridine synthase B (Pasteurella multocida (strain Pm70)).